A 279-amino-acid polypeptide reads, in one-letter code: uncharacterized protein (279 aa).

The tract at residues 60 to 92 (RKANKLNNKQDSTFFNSASGETNNTILPPGVKN) is disordered. Positions 70-85 (DSTFFNSASGETNNTI) are enriched in polar residues. Transmembrane regions (helical) follow at residues 156–176 (IVGYTNLVIVAFFAGLLAVMN), 202–222 (ISIFVISIVTLPFWTMFILFL), and 237–257 (FIWIVLIINVVLLLVSCLLMI).

The protein resides in the cell membrane. This is an uncharacterized protein from Mycoplasma genitalium (strain ATCC 33530 / DSM 19775 / NCTC 10195 / G37) (Mycoplasmoides genitalium).